The chain runs to 122 residues: Large ribosomal subunit protein uL18 (122 aa).

This sequence belongs to the universal ribosomal protein uL18 family. Part of the 50S ribosomal subunit; part of the 5S rRNA/L5/L18/L25 subcomplex. Contacts the 5S and 23S rRNAs.

In terms of biological role, this is one of the proteins that bind and probably mediate the attachment of the 5S RNA into the large ribosomal subunit, where it forms part of the central protuberance. This Pseudothermotoga lettingae (strain ATCC BAA-301 / DSM 14385 / NBRC 107922 / TMO) (Thermotoga lettingae) protein is Large ribosomal subunit protein uL18.